The primary structure comprises 525 residues: Protein kinase PINOID 2 (525 aa).

The disordered stretch occupies residues 1-27 (MANSSIFYKDNESDYESSTVGPDSSRR). The Protein kinase domain occupies 87–465 (FRLLKRLGSG…SIEIKRHEFF (379 aa)). ATP contacts are provided by residues 93–101 (LGSGDIGSV) and K118. D214 acts as the Proton acceptor in catalysis. The 60-residue stretch at 466–525 (EGVNWALIRSIKPPWVPKEETSHKTKGDNRSVNYYLPPRFMMSRKERNEPYHVSNYFDYF) folds into the AGC-kinase C-terminal domain.

Belongs to the protein kinase superfamily. Ser/Thr protein kinase family.

It carries out the reaction L-seryl-[protein] + ATP = O-phospho-L-seryl-[protein] + ADP + H(+). The catalysed reaction is L-threonyl-[protein] + ATP = O-phospho-L-threonyl-[protein] + ADP + H(+). Functionally, serine/threonine-protein kinase involved in the regulation of auxin signaling. Plays a minor role in the regulation of cellular auxin efflux and cotyledon organogenesis. This is Protein kinase PINOID 2 (PID2) from Arabidopsis thaliana (Mouse-ear cress).